The chain runs to 688 residues: Translation initiation factor IF-2 (688 aa).

The segment covering 50-62 (LLSGKEKSEKTKE) has biased composition (basic and acidic residues). Residues 50–95 (LLSGKEKSEKTKEEDDEIETTAKNPIKESINNKKSNKRDDKKEKVN) are disordered. Low complexity predominate over residues 72–82 (KNPIKESINNK). The segment covering 86–95 (KRDDKKEKVN) has biased composition (basic and acidic residues). Residues 187 to 354 (KRSPIITVMG…MILLSSEILE (168 aa)) form the tr-type G domain. The G1 stretch occupies residues 196–203 (GHVDHGKT). 196-203 (GHVDHGKT) contacts GTP. The G2 stretch occupies residues 221 to 225 (GITQH). Positions 242 to 245 (DTPG) are G3. GTP contacts are provided by residues 242–246 (DTPGH) and 296–299 (NKID). The segment at 296-299 (NKID) is G4. The segment at 332 to 334 (SAH) is G5.

This sequence belongs to the TRAFAC class translation factor GTPase superfamily. Classic translation factor GTPase family. IF-2 subfamily.

The protein resides in the cytoplasm. Functionally, one of the essential components for the initiation of protein synthesis. Protects formylmethionyl-tRNA from spontaneous hydrolysis and promotes its binding to the 30S ribosomal subunits. Also involved in the hydrolysis of GTP during the formation of the 70S ribosomal complex. In Clostridium botulinum (strain 657 / Type Ba4), this protein is Translation initiation factor IF-2.